The following is a 385-amino-acid chain: cAMP-dependent protein kinase, catalytic subunit-like (385 aa).

A Protein kinase domain is found at 63-317 (LERIVTIGKG…TQDVKDHKWF (255 aa)). ATP-binding positions include 69-77 (IGKGTFGRV) and K92. Catalysis depends on D186, which acts as the Proton acceptor. An AGC-kinase C-terminal domain is found at 318-385 (EKVNWDDTLH…QRERDLFAEW (68 aa)).

It belongs to the protein kinase superfamily. Ser/Thr protein kinase family. cAMP subfamily.

It carries out the reaction L-seryl-[protein] + ATP = O-phospho-L-seryl-[protein] + ADP + H(+). It catalyses the reaction L-threonyl-[protein] + ATP = O-phospho-L-threonyl-[protein] + ADP + H(+). The sequence is that of cAMP-dependent protein kinase, catalytic subunit-like from Caenorhabditis briggsae.